We begin with the raw amino-acid sequence, 415 residues long: Carboxypeptidase B (415 aa).

Positions 1-13 (MLLLLALVSVALA) are cleaved as a signal peptide. The propeptide at 14-108 (HASEEHFDGN…LESQFDSHTR (95 aa)) is activation peptide. The 295-residue stretch at 116–410 (KYNKWETIEA…LAVKYIANYV (295 aa)) folds into the Peptidase M14 domain. Cysteine 171 and cysteine 184 are oxidised to a cystine. Zn(2+)-binding residues include histidine 174 and glutamate 177. Substrate is bound by residues 174–177 (HARE), arginine 232, and 249–250 (NR). 2 disulfide bridges follow: cysteine 243-cysteine 266 and cysteine 257-cysteine 271. Histidine 302 is a Zn(2+) binding site. Substrate contacts are provided by residues 303 to 304 (SY) and tyrosine 354. Residue glutamate 376 is the Proton donor/acceptor of the active site.

The protein belongs to the peptidase M14 family. Requires Zn(2+) as cofactor.

The protein resides in the secreted. It is found in the zymogen granule lumen. It carries out the reaction Preferential release of a C-terminal lysine or arginine amino acid.. This Rattus norvegicus (Rat) protein is Carboxypeptidase B (Cpb1).